The chain runs to 201 residues: MYDYIKGTVTTITPEYIVVEAGQIGYQIITGNPFSFQRLEGTEAQVFLYQHVREDNISLFGFQTTEERYLFKKLLSVSGIGPKSALAIIASGDVVPLISAIESEDDVYLTKFPSVGKKTARQIILDLKGKLADVVASEIVYVAPENDMVAGLSPQLEEAVLALEALGYSTRELKKVIPKLSKEEDLTSDAYIKLALQLMTK.

Positions 1–63 (MYDYIKGTVT…EDNISLFGFQ (63 aa)) are domain I. A domain II region spans residues 64-142 (TTEERYLFKK…DVVASEIVYV (79 aa)). Positions 143-153 (APENDMVAGLS) are flexible linker. The tract at residues 153-201 (SPQLEEAVLALEALGYSTRELKKVIPKLSKEEDLTSDAYIKLALQLMTK) is domain III.

It belongs to the RuvA family. In terms of assembly, homotetramer. Forms an RuvA(8)-RuvB(12)-Holliday junction (HJ) complex. HJ DNA is sandwiched between 2 RuvA tetramers; dsDNA enters through RuvA and exits via RuvB. An RuvB hexamer assembles on each DNA strand where it exits the tetramer. Each RuvB hexamer is contacted by two RuvA subunits (via domain III) on 2 adjacent RuvB subunits; this complex drives branch migration. In the full resolvosome a probable DNA-RuvA(4)-RuvB(12)-RuvC(2) complex forms which resolves the HJ.

The protein localises to the cytoplasm. In terms of biological role, the RuvA-RuvB-RuvC complex processes Holliday junction (HJ) DNA during genetic recombination and DNA repair, while the RuvA-RuvB complex plays an important role in the rescue of blocked DNA replication forks via replication fork reversal (RFR). RuvA specifically binds to HJ cruciform DNA, conferring on it an open structure. The RuvB hexamer acts as an ATP-dependent pump, pulling dsDNA into and through the RuvAB complex. HJ branch migration allows RuvC to scan DNA until it finds its consensus sequence, where it cleaves and resolves the cruciform DNA. The polypeptide is Holliday junction branch migration complex subunit RuvA (Listeria monocytogenes serotype 4b (strain CLIP80459)).